A 346-amino-acid chain; its full sequence is N-acetyl-gamma-glutamyl-phosphate reductase (346 aa).

The active site involves Cys149.

It belongs to the NAGSA dehydrogenase family. Type 1 subfamily.

Its subcellular location is the cytoplasm. The enzyme catalyses N-acetyl-L-glutamate 5-semialdehyde + phosphate + NADP(+) = N-acetyl-L-glutamyl 5-phosphate + NADPH + H(+). It participates in amino-acid biosynthesis; L-arginine biosynthesis; N(2)-acetyl-L-ornithine from L-glutamate: step 3/4. Functionally, catalyzes the NADPH-dependent reduction of N-acetyl-5-glutamyl phosphate to yield N-acetyl-L-glutamate 5-semialdehyde. The chain is N-acetyl-gamma-glutamyl-phosphate reductase from Geobacter sulfurreducens (strain ATCC 51573 / DSM 12127 / PCA).